A 389-amino-acid polypeptide reads, in one-letter code: Succinate--CoA ligase [ADP-forming] subunit beta (389 aa).

One can recognise an ATP-grasp domain in the interval 9–236 (RDLFEKHGVP…KTTADPLEEK (228 aa)). Residues lysine 45, 52–54 (GRG), alanine 94, and glutamate 99 contribute to the ATP site. Residues asparagine 191 and aspartate 205 each coordinate Mg(2+). Residues asparagine 256 and 318–320 (GIT) each bind substrate.

It belongs to the succinate/malate CoA ligase beta subunit family. In terms of assembly, heterotetramer of two alpha and two beta subunits. Mg(2+) is required as a cofactor.

The enzyme catalyses succinate + ATP + CoA = succinyl-CoA + ADP + phosphate. The catalysed reaction is GTP + succinate + CoA = succinyl-CoA + GDP + phosphate. It participates in carbohydrate metabolism; tricarboxylic acid cycle; succinate from succinyl-CoA (ligase route): step 1/1. Succinyl-CoA synthetase functions in the citric acid cycle (TCA), coupling the hydrolysis of succinyl-CoA to the synthesis of either ATP or GTP and thus represents the only step of substrate-level phosphorylation in the TCA. The beta subunit provides nucleotide specificity of the enzyme and binds the substrate succinate, while the binding sites for coenzyme A and phosphate are found in the alpha subunit. The sequence is that of Succinate--CoA ligase [ADP-forming] subunit beta from Kocuria rhizophila (strain ATCC 9341 / DSM 348 / NBRC 103217 / DC2201).